The chain runs to 905 residues: NADH-quinone oxidoreductase subunit G (905 aa).

The 83-residue stretch at methionine 1–glutamate 83 folds into the 2Fe-2S ferredoxin-type domain. Residues cysteine 34, cysteine 45, cysteine 48, and cysteine 67 each coordinate [2Fe-2S] cluster. The 4Fe-4S His(Cys)3-ligated-type domain occupies glutamate 83–glycine 122. Histidine 99, cysteine 103, cysteine 106, cysteine 112, cysteine 151, cysteine 154, cysteine 157, cysteine 201, cysteine 228, cysteine 231, cysteine 235, and cysteine 263 together coordinate [4Fe-4S] cluster. The region spanning methionine 221 to aspartate 277 is the 4Fe-4S Mo/W bis-MGD-type domain.

It belongs to the complex I 75 kDa subunit family. In terms of assembly, composed of 13 different subunits. Subunits NuoCD, E, F, and G constitute the peripheral sector of the complex. [2Fe-2S] cluster serves as cofactor. It depends on [4Fe-4S] cluster as a cofactor.

It carries out the reaction a quinone + NADH + 5 H(+)(in) = a quinol + NAD(+) + 4 H(+)(out). Its function is as follows. NDH-1 shuttles electrons from NADH, via FMN and iron-sulfur (Fe-S) centers, to quinones in the respiratory chain. The immediate electron acceptor for the enzyme in this species is believed to be ubiquinone. Couples the redox reaction to proton translocation (for every two electrons transferred, four hydrogen ions are translocated across the cytoplasmic membrane), and thus conserves the redox energy in a proton gradient. The sequence is that of NADH-quinone oxidoreductase subunit G (nuoG) from Pseudomonas aeruginosa (strain ATCC 15692 / DSM 22644 / CIP 104116 / JCM 14847 / LMG 12228 / 1C / PRS 101 / PAO1).